The sequence spans 344 residues: MKVLSFLCVLLVSVATAKQQFSELQYRNAFTDWMITHQKSYTSEEFGARYNIFKANMDYVQQWNSKGSETVLGLNNFADITNEEYRNTYLGTKFDASSLIGTQEEKVFTTSSAASKDWRSEGAVTPVKNQGQCGGCWSFSTTGSTEGAHFQSKGELVSLSEQNLIDCSTENSGCDGGLMTYAFEYIINNNGIDTESSYPYKAENGKCEYKSENSGATLSSYKTVTAGSESSLESAVNVNPVSVAIDASHQSFQLYTSGIYYEPECSSENLDHGVLAVGYGSGSGSSSGQSSGQSSGNLSASSSNEYWIVKNSWGTSWGIEGYILMSRNRDNNCGIASSASFPVV.

A signal peptide spans 1-17; sequence MKVLSFLCVLLVSVATA. The propeptide at 18–111 is activation peptide; it reads KQQFSELQYR…TQEEKVFTTS (94 aa). Disulfide bonds link Cys133–Cys174, Cys167–Cys207, and Cys265–Cys333. Cys136 is an active-site residue. His272 is a catalytic residue. Asn297 carries N-linked (GlcNAc...) asparagine glycosylation. Asn311 is an active-site residue.

This sequence belongs to the peptidase C1 family. Glycosylated; contains GlcNAc-alpha-1-P-Ser residues.

The protein localises to the lysosome. The polypeptide is Cysteine proteinase 5 (cprE) (Dictyostelium discoideum (Social amoeba)).